The sequence spans 39 residues: Omega-actinopoditoxin-Mb1a (39 aa).

Disulfide bonds link Cys-4–Cys-19, Cys-11–Cys-30, and Cys-18–Cys-38.

In terms of processing, contains 3 disulfide bonds. Expressed by the venom gland.

Its subcellular location is the secreted. Potent inhibitor of insect, but not mammalian, voltage-gated calcium channels (Cav). In Missulena bradleyi (Eastern mouse spider), this protein is Omega-actinopoditoxin-Mb1a.